A 103-amino-acid polypeptide reads, in one-letter code: Cell division suppressor protein YneA (103 aa).

The region spanning 36–87 (VKIKVQDGDTLWSLADHVAEKKHINKEDFIEWVTENNHLQTADIKPGDELIL) is the LysM domain.

This sequence belongs to the YneA family.

It is found in the cytoplasm. Functionally, inhibits cell division during the SOS response. Affects a later stage of the cell division protein assembly, after the assembly of the Z ring, by probably suppressing recruitment of FtsL and/or DivIC to the division machinery. The chain is Cell division suppressor protein YneA from Bacillus velezensis (strain DSM 23117 / BGSC 10A6 / LMG 26770 / FZB42) (Bacillus amyloliquefaciens subsp. plantarum).